We begin with the raw amino-acid sequence, 503 residues long: Cytochrome P450 3A12 (503 aa).

Cys442 lines the heme pocket.

It belongs to the cytochrome P450 family. Heme is required as a cofactor.

The protein resides in the endoplasmic reticulum membrane. Its subcellular location is the microsome membrane. It catalyses the reaction an organic molecule + reduced [NADPH--hemoprotein reductase] + O2 = an alcohol + oxidized [NADPH--hemoprotein reductase] + H2O + H(+). Its function is as follows. Cytochromes P450 are a group of heme-thiolate monooxygenases. In liver microsomes, this enzyme is involved in an NADPH-dependent electron transport pathway. It oxidizes a variety of structurally unrelated compounds, including steroids, fatty acids, and xenobiotics. In Canis lupus familiaris (Dog), this protein is Cytochrome P450 3A12 (CYP3A12).